Consider the following 334-residue polypeptide: Methionine adenosyltransferase 2 subunit beta (334 aa).

Residues 37 to 40 (TGLL), 60 to 62 (FRR), 71 to 72 (NL), C93, R97, Y159, and L185 contribute to the NADP(+) site. The residue at position 309 (T309) is a Phosphothreonine. The required for interaction with MAT2A stretch occupies residues 319 to 334 (LWPFLIDKRWRQTVFH).

The protein belongs to the dTDP-4-dehydrorhamnose reductase family. MAT2B subfamily. As to quaternary structure, heterotrimer; composed of a catalytic MAT2A homodimer that binds one regulatory MAT2B chain. Heterohexamer; composed of a central, catalytic MAT2A homotetramer flanked on either side by a regulatory MAT2B chain. NADP binding increases the affinity for MAT2A.

The protein operates within amino-acid biosynthesis; S-adenosyl-L-methionine biosynthesis; S-adenosyl-L-methionine from L-methionine: step 1/1. In terms of biological role, regulatory subunit of S-adenosylmethionine synthetase 2, an enzyme that catalyzes the formation of S-adenosylmethionine from methionine and ATP. Regulates MAT2A catalytic activity by changing its kinetic properties, increasing its affinity for L-methionine. Can bind NADP (in vitro). This Bos taurus (Bovine) protein is Methionine adenosyltransferase 2 subunit beta (MAT2B).